A 351-amino-acid polypeptide reads, in one-letter code: Biotin synthase (351 aa).

The Radical SAM core domain occupies 58–285; that stretch reads NTVQLSTLLS…RAMVRLSAGR (228 aa). Residues Cys-73, Cys-77, and Cys-80 each coordinate [4Fe-4S] cluster. [2Fe-2S] cluster is bound by residues Cys-117, Cys-148, Cys-208, and Arg-280.

Belongs to the radical SAM superfamily. Biotin synthase family. In terms of assembly, homodimer. [4Fe-4S] cluster is required as a cofactor. [2Fe-2S] cluster serves as cofactor.

The catalysed reaction is (4R,5S)-dethiobiotin + (sulfur carrier)-SH + 2 reduced [2Fe-2S]-[ferredoxin] + 2 S-adenosyl-L-methionine = (sulfur carrier)-H + biotin + 2 5'-deoxyadenosine + 2 L-methionine + 2 oxidized [2Fe-2S]-[ferredoxin]. It participates in cofactor biosynthesis; biotin biosynthesis; biotin from 7,8-diaminononanoate: step 2/2. Catalyzes the conversion of dethiobiotin (DTB) to biotin by the insertion of a sulfur atom into dethiobiotin via a radical-based mechanism. In Paraburkholderia phymatum (strain DSM 17167 / CIP 108236 / LMG 21445 / STM815) (Burkholderia phymatum), this protein is Biotin synthase.